Reading from the N-terminus, the 69-residue chain is A-kinase anchor protein inhibitor 1 (69 aa).

Residues Gln39–Lys69 form a disordered region. The segment covering Ser41–Asp50 has biased composition (basic and acidic residues).

In terms of assembly, binds cAMP-dependent protein kinase (PKA). Interacts specifically with RII-regulatory subunits of PKA (PRKAR2A and PRKAR2B). In terms of tissue distribution, preferentially expressed in the neural tissues.

Its function is as follows. Protein kinase A (PKA)-binding protein. Binds to type II regulatory subunits of protein kinase A (PKA) and may block the A-kinase anchoring protein (AKAP)-mediated subcellular localization of PKA. This chain is A-kinase anchor protein inhibitor 1, found in Mus musculus (Mouse).